Reading from the N-terminus, the 339-residue chain is Lipoate-protein ligase A (339 aa).

The BPL/LPL catalytic domain occupies 29 to 217 (PKKQSILFLW…AFFQHYGMKV (189 aa)). ATP is bound by residues arginine 71, 76–79 (GAVF), and lysine 135. Lysine 135 is a (R)-lipoate binding site.

Belongs to the LplA family. Monomer.

It is found in the cytoplasm. The catalysed reaction is L-lysyl-[lipoyl-carrier protein] + (R)-lipoate + ATP = N(6)-[(R)-lipoyl]-L-lysyl-[lipoyl-carrier protein] + AMP + diphosphate + H(+). It participates in protein modification; protein lipoylation via exogenous pathway; protein N(6)-(lipoyl)lysine from lipoate: step 1/2. It functions in the pathway protein modification; protein lipoylation via exogenous pathway; protein N(6)-(lipoyl)lysine from lipoate: step 2/2. Catalyzes both the ATP-dependent activation of exogenously supplied lipoate to lipoyl-AMP and the transfer of the activated lipoyl onto the lipoyl domains of lipoate-dependent enzymes. The chain is Lipoate-protein ligase A from Blochmanniella pennsylvanica (strain BPEN).